The chain runs to 59 residues: UPF0391 membrane protein AZC_4184 (59 aa).

The next 2 membrane-spanning stretches (helical) occupy residues 4–24 (WALTFLVVAIIAAVLGFTAVA) and 30–50 (IAKIIFYVAIVLFLISAVMGF).

It belongs to the UPF0391 family.

The protein localises to the cell membrane. This is UPF0391 membrane protein AZC_4184 from Azorhizobium caulinodans (strain ATCC 43989 / DSM 5975 / JCM 20966 / LMG 6465 / NBRC 14845 / NCIMB 13405 / ORS 571).